Here is a 281-residue protein sequence, read N- to C-terminus: Ribosomal RNA small subunit methyltransferase A (281 aa).

The S-adenosyl-L-methionine site is built by Asn36, Leu38, Gly63, Glu84, Asp109, and Asn127.

Belongs to the class I-like SAM-binding methyltransferase superfamily. rRNA adenine N(6)-methyltransferase family. RsmA subfamily.

Its subcellular location is the cytoplasm. It catalyses the reaction adenosine(1518)/adenosine(1519) in 16S rRNA + 4 S-adenosyl-L-methionine = N(6)-dimethyladenosine(1518)/N(6)-dimethyladenosine(1519) in 16S rRNA + 4 S-adenosyl-L-homocysteine + 4 H(+). Functionally, specifically dimethylates two adjacent adenosines (A1518 and A1519) in the loop of a conserved hairpin near the 3'-end of 16S rRNA in the 30S particle. May play a critical role in biogenesis of 30S subunits. This is Ribosomal RNA small subunit methyltransferase A from Borreliella burgdorferi (strain ATCC 35210 / DSM 4680 / CIP 102532 / B31) (Borrelia burgdorferi).